The following is a 162-amino-acid chain: B-box zinc finger protein 23 (162 aa).

C5, C8, C28, H33, C63, C66, C86, and H91 together coordinate Zn(2+). The B box-type 1; atypical zinc finger occupies 5–47 (CEVCEKAEAEVLCCSDEAVLCKPCDIKVHEANKLFQRHHRVAL). The segment at 63–101 (CDICQERKGYFFCLEDRAMLCNDCDEAIHTCNSHQRFLL) adopts a B box-type 2; atypical zinc-finger fold. Residues 137–162 (QYSSEETEAGNSGEIVHKNPSVILSP) are disordered.

The protein localises to the nucleus. Probable transcription factor that may be involved in seedling photomorphogenesis. This Arabidopsis thaliana (Mouse-ear cress) protein is B-box zinc finger protein 23.